Reading from the N-terminus, the 2627-residue chain is MEKLHGHVSAHPDILSLENRCLAMLPDLQPLEKLHQHVSTHSDILSLKNQCLATLPDLKTMEKPHGYVSAHPDILSLENQCLATLSDLKTMEKPHGHVSAHPDILSLENRCLATLSSLKSTVSASPLFQSLQISHMTQADLYRVNNSNCLLSEPPSWRAQHFSKGLDLSTCPIALKSISATETAQEATLGRWFDSEEKKGAETQMPSYSLSLGEEEEVEDLAVKLTSGDSESHPEPTDHVLQEKKMALLSLLCSTLVSEVNMNNTSDPTLAAIFEICRELALLEPEFILKASLYARQQLNVRNVANNILAIAAFLPACRPHLRRYFCAIVQLPSDWIQVAELYQSLAEGDKNKLVPLPACLRTAMTDKFAQFDEYQLAKYNPRKHRAKRHPRRPPRSPGMEPPFSHRCFPRYIGFLREEQRKFEKAGDTVSEKKNPPRFTLKKLVQRLHIHKPAQHVQALLGYRYPSNLQLFSRSRLPGPWDSSRAGKRMKLSRPETWERELSLRGNKASVWEELIENGKLPFMAMLRNLCNLLRVGISSRHHELILQRLQHAKSVIHSRQFPFRFLNAHDAIDALEAQLRNQALPFPSNITLMRRILTRNEKNRPRRRFLCHLSRQQLRMAMRIPVLYEQLKREKLRVHKARQWKYDGEMLNRYRQALETAVNLSVKHSLPLLPGRTVLVYLTDANADRLCPKSNPQGPPLNYALLLIGMMITRAEQVDVVLCGGDTLKTAVLKAEEGILKTAIKLQAQVQEFDENDGWSLNTFGKYLLSLAGQRVPVDRVILLGQSMDDGMINVAKQLYWQRVNSKCLFVGILLRRVQYLSTDLNPNDVTLSGCTDAILKFIAEHGASHLLEHVGQMDKIFKIPPPPGKTGVQSLRPLEEDTPSPLAPVSQQGWRSIRLFISSTFRDMHGERDLLLRSVLPALQARAAPHRISLHGIDLRWGVTEEETRRNRQLEVCLGEVENAQLFVGILGSRYGYIPPSYNLPDHPHFHWAQQYPSGRSVTEMEVMQFLNRNQRLQPSAQALIYFRDSSFLSSVPDAWKSDFVSESEEAARRISELKSYLSRQKGITCRRYPCEWGGVAAGRPYVGGLEEFGQLVLQDVWNMIQKLYLQPGALLEQPVSIPDDDLVQATFQQLQKPPSPARPRLLQDTVQRLMLPHGRLSLVTGQSGQGKTAFLASLVSALQAPDGAKVASLVFFHFSGARPDQGLALTLLRRLCTYLRGQLKEPGALPSTYRSLVWELQQRLLPKSAESLHPGQTQVLIIDGADRLVDQNGQLISDWIPKKLPRCVHLVLSVSSDAGLGETLEQSQGAHVLALGPLEASARARLVREELALYGKRLEESPFNNQMRLLLVKRESGRPLYLRLVTDHLRLFTLYEQVSERLRTLPATVPLLLQHILSTLEKEHGPDVLPQALTALEVTRSGLTVDQLHGVLSVWRTLPKGTKSWEEAVAAGNSGDPYPMGPFACLVQSLRSLLGEGPLERPGARLCLPDGPLRTAAKRCYGKRPGLEDTAHILIAAQLWKTCDADASGTFRSCPPEALGDLPYHLLQSGNRGLLSKFLTNLHVVAAHLELGLVSRLLEAHALYASSVPKEEQKLPEADVAVFRTFLRQQASILSQYPRLLPQQAANQPLDSPLCHQASLLSRRWHLQHTLRWLNKPRTMKNQQSSSLSLAVSSSPTAVAFSTNGQRAAVGTANGTVYLLDLRTWQEEKSVVSGCDGISACLFLSDDTLFLTAFDGLLELWDLQHGCRVLQTKAHQYQITGCCLSPDCRLLATVCLGGCLKLWDTVRGQLAFQHTYPKSLNCVAFHPEGQVIATGSWAGSISFFQVDGLKVTKDLGAPGASIRTLAFNVPGGVVAVGRLDSMVELWAWREGARLAAFPAHHGFVAAALFLHAGCQLLTAGEDGKVQVWSGSLGRPRGHLGSLSLSPALSVALSPDGDRVAVGYRADGIRIYKISSGSQGAQGQALDVAVSALAWLSPKVLVSGAEDGSLQGWALKECSLQSLWLLSRFQKPVLGLATSQELLASASEDFTVQLWPRQLLTRPHKAEDFPCGTELRGHEGPVSCCSFSTDGGSLATGGRDRSLLCWDVRTPKTPVLIHSFPACHRDWVTGCAWTKDNLLISCSSDGSVGLWDPESGQRLGQFLGHQSAVSAVAAVEEHVVSVSRDGTLKVWDHQGVELTSIPAHSGPISHCAAAMEPRAAGQPGSELLVVTVGLDGATRLWHPLLVCQTHTLLGHSGPVRAAAVSETSGLMLTASEDGSVRLWQVPKEADDTCIPRSSAAVTAVAWAPDGSMAVSGNQAGELILWQEAKAVATAQAPGHIGALIWSSAHTFFVLSADEKISEWQVKLRKGSAPGNLSLHLNRILQEDLGVLTSLDWAPDGHFLILAKADLKLLCMKPGDAPSEIWSSYTENPMILSTHKEYGIFVLQPKDPGVLSFLRQKESGEFEERLNFDINLENPSRTLISITQAKPESESSFLCASSDGILWNLAKCSPEGEWTTGNMWQKKANTPETQTPGTDPSTCRESDASMDSDASMDSEPTPHLKTRQRRKIHSGSVTALHVLPELLVTASKDRDVKLWERPSMQLLGLFRCEGSVSCLEPWLGANSTLQLAVGDVQGNVYFLNWE.

TEP1 N-terminal repeat units follow at residues 1–30 (MEKL…DLQP), 31–60 (LEKL…DLKT), 61–90 (MEKP…DLKT), and 91–120 (MEKP…SLKS). Disordered stretches follow at residues 193–214 (FDSE…SLGE) and 383–402 (RKHR…GMEP). The TROVE domain occupies 223–676 (VKLTSGDSES…VKHSLPLLPG (454 aa)). Over residues 383-395 (RKHRAKRHPRRPP) the composition is skewed to basic residues. Positions 1162 to 1490 (RLSLVTGQSG…PLERPGARLC (329 aa)) constitute an NACHT domain. 1168–1175 (GQSGQGKT) provides a ligand contact to ATP. WD repeat units lie at residues 1411–1448 (VLPQ…TKSW), 1674–1713 (AVSS…EEKS), 1716–1754 (SGCD…RVLQ), 1757–1796 (AHQY…LAFQ), 1798–1837 (TYPK…VTKD), 1840–1879 (APGA…RLAA), 1882–1921 (AHHG…PRGH), 1925–1964 (LSLS…QGAQ), 1967–2005 (ALDV…LQSL), 2008–2047 (LSRF…RPHK), 2059–2098 (GHEG…TPVL), 2105–2143 (CHRD…RLGQ), 2146–2183 (GHQS…LTSI), 2185–2233 (AHSG…QTHT), 2236–2275 (GHSG…DDTC), 2278–2317 (RSSA…ATAQ), 2319–2355 (PGHI…GSAP), 2368–2417 (EDLG…PMIL), and 2459–2500 (NPSR…GEWT). Residues 2506-2522 (QKKANTPETQTPGTDPS) show a composition bias toward polar residues. The tract at residues 2506-2551 (QKKANTPETQTPGTDPSTCRESDASMDSDASMDSEPTPHLKTRQRR) is disordered. WD repeat units lie at residues 2553–2590 (IHSG…LLGL) and 2592–2626 (RCEG…FLNW).

In terms of assembly, associated component of the telomerase holoenzyme complex. Component of the vault ribonucleoprotein particle, at least composed of MVP, PARP4 and one or more vault RNAs (vRNAs). Binds to VAULTRC1, VAULTRC2 and VAULTRC4/hvg4 vRNAs. As to expression, ubiquitous.

The protein resides in the nucleus. Its subcellular location is the chromosome. It is found in the telomere. Its function is as follows. Component of the telomerase ribonucleoprotein complex that is essential for the replication of chromosome termini. Also a component of the ribonucleoprotein vaults particle, a multi-subunit structure involved in nucleo-cytoplasmic transport. Responsible for the localizing and stabilizing vault RNA (vRNA) association in the vault ribonucleoprotein particle. Binds to TERC. This chain is Telomerase protein component 1 (TEP1), found in Homo sapiens (Human).